Reading from the N-terminus, the 194-residue chain is ATP-dependent Clp protease proteolytic subunit (194 aa).

Serine 98 serves as the catalytic Nucleophile. The active site involves histidine 123.

It belongs to the peptidase S14 family. As to quaternary structure, fourteen ClpP subunits assemble into 2 heptameric rings which stack back to back to give a disk-like structure with a central cavity, resembling the structure of eukaryotic proteasomes.

It localises to the cytoplasm. The catalysed reaction is Hydrolysis of proteins to small peptides in the presence of ATP and magnesium. alpha-casein is the usual test substrate. In the absence of ATP, only oligopeptides shorter than five residues are hydrolyzed (such as succinyl-Leu-Tyr-|-NHMec, and Leu-Tyr-Leu-|-Tyr-Trp, in which cleavage of the -Tyr-|-Leu- and -Tyr-|-Trp bonds also occurs).. Functionally, cleaves peptides in various proteins in a process that requires ATP hydrolysis. Has a chymotrypsin-like activity. Plays a major role in the degradation of misfolded proteins. This is ATP-dependent Clp protease proteolytic subunit from Wigglesworthia glossinidia brevipalpis.